The following is a 271-amino-acid chain: MLIHPEINPVALQLGPLAIHWYGLTYLAAFGLFFFLASLRLRHEPYASITGPGAWSRRDIEDILFLGVMGVVIGGRLGYCLFYKPGYYLTHPLEIFAVWQGGMSFHGGMLGVLVSQWWFARSRQRPWLQVMDFIAPCVPTGLAAGRVGNFINGELWGRFSAPDLPWGMVFAHSGSMLPRHPSQVYQFLMEGLLLFVLLWLYARKPRKMGQVSGAFLVGYGVFRFIAEFFREPDDFLGILALGMSMGQWLCVPMIAAGIWLWIWASNRTSRR.

Helical transmembrane passes span 17 to 37, 63 to 83, and 95 to 115; these read LAIHWYGLTYLAAFGLFFFLA, ILFLGVMGVVIGGRLGYCLFY, and IFAVWQGGMSFHGGMLGVLVS. Arginine 146 serves as a coordination point for a 1,2-diacyl-sn-glycero-3-phospho-(1'-sn-glycerol). A run of 3 helical transmembrane segments spans residues 182 to 202, 209 to 229, and 243 to 263; these read SQVYQFLMEGLLLFVLLWLYA, GQVSGAFLVGYGVFRFIAEFF, and MSMGQWLCVPMIAAGIWLWIW.

Belongs to the Lgt family.

It localises to the cell inner membrane. The catalysed reaction is L-cysteinyl-[prolipoprotein] + a 1,2-diacyl-sn-glycero-3-phospho-(1'-sn-glycerol) = an S-1,2-diacyl-sn-glyceryl-L-cysteinyl-[prolipoprotein] + sn-glycerol 1-phosphate + H(+). Its pathway is protein modification; lipoprotein biosynthesis (diacylglyceryl transfer). Its function is as follows. Catalyzes the transfer of the diacylglyceryl group from phosphatidylglycerol to the sulfhydryl group of the N-terminal cysteine of a prolipoprotein, the first step in the formation of mature lipoproteins. This chain is Phosphatidylglycerol--prolipoprotein diacylglyceryl transferase, found in Polaromonas naphthalenivorans (strain CJ2).